The sequence spans 84 residues: MATNKSCTAFDFNKMLDGVCTYVKGVQQYLTELETSTQGTVDLGTMFNLQFRMQILSQYMESVSNILTAVNTEMITMARAVKGS.

This sequence belongs to the chlamydial CPn_0710/CT_666/TC_0037 family.

This is an uncharacterized protein from Chlamydia pneumoniae (Chlamydophila pneumoniae).